The following is a 1196-amino-acid chain: DNA-directed RNA polymerase I subunit RPA2 (1196 aa).

Residues 1097–1124 (CRECGSILTTQSSVPKIGSMVTIRCRRC) form a C4-type zinc finger.

It belongs to the RNA polymerase beta chain family. As to quaternary structure, component of the RNA polymerase I (Pol I) complex consisting of 14 subunits.

It localises to the nucleus. Its subcellular location is the nucleolus. The catalysed reaction is RNA(n) + a ribonucleoside 5'-triphosphate = RNA(n+1) + diphosphate. DNA-dependent RNA polymerase catalyzes the transcription of DNA into RNA using the four ribonucleoside triphosphates as substrates. Second largest core component of RNA polymerase I which synthesizes ribosomal RNA precursors. Proposed to contribute to the polymerase catalytic activity and forms the polymerase active center together with the largest subunit. Pol I is composed of mobile elements and RPA2 is part of the core element with the central large cleft and probably a clamp element that moves to open and close the cleft. The sequence is that of DNA-directed RNA polymerase I subunit RPA2 (RPA2) from Eremothecium gossypii (strain ATCC 10895 / CBS 109.51 / FGSC 9923 / NRRL Y-1056) (Yeast).